Consider the following 524-residue polypeptide: Na(+)/H(+) antiporter NhaB (524 aa).

The next 9 membrane-spanning stretches (helical) occupy residues 13 to 33 (FLGN…IINP), 98 to 118 (LLLV…LFVF), 140 to 160 (AFLS…SVSV), 239 to 259 (FFIR…LVCL), 304 to 324 (AIIG…VGLV), 325 to 345 (GLSV…HSLG), 358 to 378 (LTVF…TPII), 448 to 468 (ATPN…APLI), and 479 to 499 (ALPY…FLLV).

This sequence belongs to the NhaB Na(+)/H(+) (TC 2.A.34) antiporter family.

It localises to the cell inner membrane. It catalyses the reaction 2 Na(+)(in) + 3 H(+)(out) = 2 Na(+)(out) + 3 H(+)(in). Functionally, na(+)/H(+) antiporter that extrudes sodium in exchange for external protons. The protein is Na(+)/H(+) antiporter NhaB of Yersinia pseudotuberculosis serotype I (strain IP32953).